Reading from the N-terminus, the 797-residue chain is Calcium-transporting ATPase CtpE (797 aa).

3 helical membrane-spanning segments follow: residues Leu55–Ile75, Ile215–Leu235, and Val254–Val274. The active-site 4-aspartylphosphate intermediate is Asp301. Residues Asp301, Thr303, and Asp536 each coordinate Mg(2+). 6 helical membrane passes run Thr601–Leu621, Ile633–Ala653, Val667–Leu687, Ala703–Ala723, Trp729–Leu749, and Thr764–Ile784.

It belongs to the cation transport ATPase (P-type) (TC 3.A.3) family.

It localises to the cell membrane. The catalysed reaction is Ca(2+)(in) + ATP + H2O = Ca(2+)(out) + ADP + phosphate + H(+). In terms of biological role, P-type ATPase involved in specific uptake of calcium. The protein is Calcium-transporting ATPase CtpE (ctpE) of Mycobacterium bovis (strain ATCC BAA-935 / AF2122/97).